Reading from the N-terminus, the 365-residue chain is tRNA N6-adenosine threonylcarbamoyltransferase (365 aa).

Fe cation contacts are provided by His-119 and His-123. Substrate-binding positions include 141–145 (LVSGG), Asp-174, Gly-187, and Asn-288. Asp-316 serves as a coordination point for Fe cation.

This sequence belongs to the KAE1 / TsaD family. Requires Fe(2+) as cofactor.

The protein localises to the cytoplasm. The catalysed reaction is L-threonylcarbamoyladenylate + adenosine(37) in tRNA = N(6)-L-threonylcarbamoyladenosine(37) in tRNA + AMP + H(+). In terms of biological role, required for the formation of a threonylcarbamoyl group on adenosine at position 37 (t(6)A37) in tRNAs that read codons beginning with adenine. Is involved in the transfer of the threonylcarbamoyl moiety of threonylcarbamoyl-AMP (TC-AMP) to the N6 group of A37, together with TsaE and TsaB. TsaD likely plays a direct catalytic role in this reaction. In Rhizobium etli (strain ATCC 51251 / DSM 11541 / JCM 21823 / NBRC 15573 / CFN 42), this protein is tRNA N6-adenosine threonylcarbamoyltransferase.